Reading from the N-terminus, the 329-residue chain is Malate dehydrogenase (329 aa).

12 to 18 (GAAGQIG) lines the NAD(+) pocket. Arg-95 and Arg-101 together coordinate substrate. NAD(+)-binding positions include Asn-108, Gln-115, and 132 to 134 (VGN). Substrate contacts are provided by Asn-134 and Arg-165. His-190 functions as the Proton acceptor in the catalytic mechanism.

This sequence belongs to the LDH/MDH superfamily. MDH type 2 family.

It carries out the reaction (S)-malate + NAD(+) = oxaloacetate + NADH + H(+). Catalyzes the reversible oxidation of malate to oxaloacetate. This chain is Malate dehydrogenase, found in Janthinobacterium sp. (strain Marseille) (Minibacterium massiliensis).